Reading from the N-terminus, the 142-residue chain is Small ribosomal subunit protein eS6 (142 aa).

The tract at residues 117–142 is disordered; sequence EKPLDELAPKKEKKEGAAGGRAPAKK. The segment covering 118-132 has biased composition (basic and acidic residues); it reads KPLDELAPKKEKKEG.

This sequence belongs to the eukaryotic ribosomal protein eS6 family.

In Methanocella arvoryzae (strain DSM 22066 / NBRC 105507 / MRE50), this protein is Small ribosomal subunit protein eS6.